The chain runs to 156 residues: Small ribosomal subunit protein uS7 (156 aa).

It belongs to the universal ribosomal protein uS7 family. As to quaternary structure, part of the 30S ribosomal subunit. Contacts proteins S9 and S11.

Functionally, one of the primary rRNA binding proteins, it binds directly to 16S rRNA where it nucleates assembly of the head domain of the 30S subunit. Is located at the subunit interface close to the decoding center, probably blocks exit of the E-site tRNA. This Nitrosomonas europaea (strain ATCC 19718 / CIP 103999 / KCTC 2705 / NBRC 14298) protein is Small ribosomal subunit protein uS7.